The following is a 224-amino-acid chain: Flagellar L-ring protein (224 aa).

The signal sequence occupies residues 1–15 (MLRYLMVGSLLVLAG). Cysteine 16 is lipidated: N-palmitoyl cysteine. Cysteine 16 is lipidated: S-diacylglycerol cysteine.

This sequence belongs to the FlgH family. As to quaternary structure, the basal body constitutes a major portion of the flagellar organelle and consists of four rings (L,P,S, and M) mounted on a central rod.

It localises to the cell outer membrane. It is found in the bacterial flagellum basal body. Assembles around the rod to form the L-ring and probably protects the motor/basal body from shearing forces during rotation. The polypeptide is Flagellar L-ring protein (Shewanella amazonensis (strain ATCC BAA-1098 / SB2B)).